Reading from the N-terminus, the 612-residue chain is Dihydroxy-acid dehydratase (612 aa).

Residue aspartate 81 participates in Mg(2+) binding. Residue cysteine 122 coordinates [2Fe-2S] cluster. Mg(2+) contacts are provided by aspartate 123 and lysine 124. Lysine 124 carries the N6-carboxylysine modification. A [2Fe-2S] cluster-binding site is contributed by cysteine 193. Glutamate 489 contacts Mg(2+). Catalysis depends on serine 515, which acts as the Proton acceptor.

Belongs to the IlvD/Edd family. Homodimer. The cofactor is [2Fe-2S] cluster. Mg(2+) is required as a cofactor.

It carries out the reaction (2R)-2,3-dihydroxy-3-methylbutanoate = 3-methyl-2-oxobutanoate + H2O. The enzyme catalyses (2R,3R)-2,3-dihydroxy-3-methylpentanoate = (S)-3-methyl-2-oxopentanoate + H2O. The protein operates within amino-acid biosynthesis; L-isoleucine biosynthesis; L-isoleucine from 2-oxobutanoate: step 3/4. It participates in amino-acid biosynthesis; L-valine biosynthesis; L-valine from pyruvate: step 3/4. In terms of biological role, functions in the biosynthesis of branched-chain amino acids. Catalyzes the dehydration of (2R,3R)-2,3-dihydroxy-3-methylpentanoate (2,3-dihydroxy-3-methylvalerate) into 2-oxo-3-methylpentanoate (2-oxo-3-methylvalerate) and of (2R)-2,3-dihydroxy-3-methylbutanoate (2,3-dihydroxyisovalerate) into 2-oxo-3-methylbutanoate (2-oxoisovalerate), the penultimate precursor to L-isoleucine and L-valine, respectively. The polypeptide is Dihydroxy-acid dehydratase (Pseudomonas paraeruginosa (strain DSM 24068 / PA7) (Pseudomonas aeruginosa (strain PA7))).